Consider the following 350-residue polypeptide: Sodium/calcium exchanger MaX1 (350 aa).

A run of 10 helical transmembrane segments spans residues Val4–Val24, Phe39–Ile59, Ile69–Ala89, Met101–Phe121, Leu125–Phe145, Gly202–Ala222, Val242–Ala264, Val276–Pro296, Met302–Ile322, and Arg330–Ile350.

Belongs to the Ca(2+):cation antiporter (CaCA) (TC 2.A.19) family.

Its subcellular location is the cell membrane. Its activity is regulated as follows. Calcium transport is inhibited by Na(+), K(+), Li(+), Mg(2+) or Mn(2+). In terms of biological role, catalyzes Na(+)/Ca(2+) exchange. The transport is electrogenic with a likely stoichiometry of 3 or more Na(+) for each Ca(2+). Is K(+)-independent. This Methanosarcina acetivorans (strain ATCC 35395 / DSM 2834 / JCM 12185 / C2A) protein is Sodium/calcium exchanger MaX1 (maX1).